A 293-amino-acid polypeptide reads, in one-letter code: Nucleotide-binding protein Bcer98_3698 (293 aa).

14–21 is a binding site for ATP; the sequence is GMSGAGKT. Residue 65–68 participates in GTP binding; that stretch reads DLRG.

The protein belongs to the RapZ-like family.

In terms of biological role, displays ATPase and GTPase activities. This Bacillus cytotoxicus (strain DSM 22905 / CIP 110041 / 391-98 / NVH 391-98) protein is Nucleotide-binding protein Bcer98_3698.